Here is a 737-residue protein sequence, read N- to C-terminus: MVSSEPKGPANVANTASPLKAHESSGKRANGQKFKPGGAGGARKFDKFGGGAGKSFVKPGAGGAKKFDKSGPGGFKKFDKSGATGDKRLGGNKFRGKPQTQPQAPAEGEKQDWNKFKKEKKDLKLKRKSAKDTYEISKEANQIHEKLRCRRTENKDKLVEQIYKVLNVGDTISKVVKAHDTARVIQSMLKYASPALRAEISEKLLPFTVEMCQSKYAQFCVQRMLKYGAPATKAKLVDSLYGHIVRLAGHSIGSGLLDSMYQSATPNQRIYMRQEFYGDLYRKAKDSNVKTLSDTYKEATNMKASILGSVKANLDHVANKQLVDSALVHAVMLEYLRACDEDEEKLEETVTAFAALVPHMLSTKEGSEAAVICFYKSTPKNRRAIIKNIKEHLLKIANHEHGHVFLISLLNALDDTKATKKAIYDHLHGDLKALMSSPYGRRVIQWLVAPGDTTCFHPEFIRTVEEGLAFGKKEKELRRKEILEQIEAPIAQSIAEDAAFWLSNSHIGLVTGDILNHIQGESYEKAASALAQVVVQPEWRISADAAGPQPQDKKKPHNDVEAIIAQATKQRRKLLYVESSSDDEDEDEDEDEESDDEGDEKEQKEAAADDAEPKVKKAKKEPKKPKAKEEEPAAPLVSGIEEAGMHIVLKKILKNDGKREGTPFSQQLLQNLSSDVLKAWLGVNRACFVLLKLVEECPALLDDCKKAIAAERSLSQILADRKTPGAKLLAAKLDIGK.

The segment at 1 to 128 is disordered; the sequence is MVSSEPKGPA…EKKDLKLKRK (128 aa). Basic and acidic residues-rich tracts occupy residues 76 to 89 and 107 to 122; these read KKFD…DKRL and EGEK…EKKD. In terms of domain architecture, PUM-HD spans 139 to 490; the sequence is EANQIHEKLR…EILEQIEAPI (352 aa). Pumilio repeat units follow at residues 167-202, 203-238, 239-274, 388-425, and 426-462; these read NVGD…EISE, KLLP…KLVD, SLYG…YMRQ, NIKE…AIYD, and HLHG…EFIR. Residues 577–638 form a disordered region; that stretch reads VESSSDDEDE…EEEPAAPLVS (62 aa). The span at 580–600 shows a compositional bias: acidic residues; that stretch reads SSDDEDEDEDEDEESDDEGDE. The segment covering 601–615 has biased composition (basic and acidic residues); sequence KEQKEAAADDAEPKV. A compositionally biased stretch (basic residues) spans 616-626; the sequence is KKAKKEPKKPK.

The polypeptide is Protein penguin (Drosophila melanogaster (Fruit fly)).